Here is a 529-residue protein sequence, read N- to C-terminus: Lysophosphatidylcholine acyltransferase 2 (529 aa).

The Cytoplasmic portion of the chain corresponds to M1–R50. Residues A51–G71 form a helical; Signal-anchor for type II membrane protein membrane-spanning segment. Over Q72–D529 the chain is Lumenal. The HXXXXD motif signature appears at H128–D133. Residues E202–C205 carry the EGTC motif motif. N-linked (GlcNAc...) asparagine glycosylation is present at N207. EF-hand domains lie at P373–P408, N410–V445, and D449–Y480. Ca(2+)-binding residues include D386, N388, D390, T392, E397, D423, D425, D427, C429, E434, D458, D460, S462, H464, and E469.

The protein belongs to the 1-acyl-sn-glycerol-3-phosphate acyltransferase family.

Its subcellular location is the endoplasmic reticulum membrane. The protein resides in the golgi apparatus membrane. It is found in the cell membrane. The protein localises to the lipid droplet. It catalyses the reaction a 1-acyl-sn-glycero-3-phosphocholine + an acyl-CoA = a 1,2-diacyl-sn-glycero-3-phosphocholine + CoA. It carries out the reaction a 1-O-alkyl-sn-glycero-3-phosphocholine + acetyl-CoA = a 1-O-alkyl-2-acetyl-sn-glycero-3-phosphocholine + CoA. The enzyme catalyses a 1-acyl-sn-glycero-3-phosphate + an acyl-CoA = a 1,2-diacyl-sn-glycero-3-phosphate + CoA. The catalysed reaction is a 1-O-(1Z-alkenyl)-sn-glycero-3-phosphocholine + an acyl-CoA = a 1-O-(1Z-alkenyl)-2-acyl-sn-glycero-3-phosphocholine + CoA. It catalyses the reaction 1-hexadecanoyl-sn-glycero-3-phosphate + (9Z)-octadecenoyl-CoA = 1-hexadecanoyl-2-(9Z-octadecenoyl)-sn-glycero-3-phosphate + CoA. It carries out the reaction 1-(9Z-octadecenoyl)-sn-glycero-3-phosphate + (9Z)-octadecenoyl-CoA = 1,2-di-(9Z-octadecenoyl)-sn-glycero-3-phosphate + CoA. The enzyme catalyses 1-(9Z-octadecenoyl)-sn-glycero-3-phosphate + hexadecanoyl-CoA = 1-(9Z)-octadecenoyl-2-hexadecanoyl-sn-glycero-3-phosphate + CoA. The catalysed reaction is 1-heptadecanoyl-sn-glycero-3-phosphate + (9Z)-octadecenoyl-CoA = 1-heptadecanoyl-2-(9Z)-octadecenoyl-sn-glycero-3-phosphate + CoA. It catalyses the reaction 1-octadecanoyl-sn-glycero-3-phosphate + (9Z)-octadecenoyl-CoA = 1-octadecanoyl-2-(9Z-octadecenoyl)-sn-glycero-3-phosphate + CoA. It carries out the reaction heptadecanoyl-CoA + 1-(9Z-octadecenoyl)-sn-glycero-3-phosphate = 1-(9Z)-octadecenoyl-2-heptadecanoyl-sn-glycero-3-phosphate + CoA. The enzyme catalyses 1-(9Z-octadecenoyl)-sn-glycero-3-phosphate + (9Z,12Z)-octadecadienoyl-CoA = 1-(9Z)-octadecenoyl-2-(9Z,12Z)-octadecadienoyl-sn-glycero-3-phosphate + CoA. The catalysed reaction is 1-(9Z-octadecenoyl)-sn-glycero-3-phosphate + tetradecanoyl-CoA = 1-(9Z)-octadecenoyl-2-tetradecanoyl-sn-glycero-3-phosphate + CoA. It catalyses the reaction pentadecanoyl-CoA + 1-(9Z-octadecenoyl)-sn-glycero-3-phosphate = 1-(9Z)-octadecenoyl-2-pentadecanoyl-sn-glycero-3-phosphate + CoA. It carries out the reaction nonadecanoyl-CoA + 1-(9Z-octadecenoyl)-sn-glycero-3-phosphate = 1-(9Z)-octadecenoyl-2-nonadecanoyl-sn-glycero-3-phosphate + CoA. The enzyme catalyses 1-hexadecanoyl-sn-glycero-3-phosphocholine + (9Z)-octadecenoyl-CoA = 1-hexadecanoyl-2-(9Z-octadecenoyl)-sn-glycero-3-phosphocholine + CoA. The catalysed reaction is 1-O-hexadecyl-sn-glycero-3-phosphocholine + acetyl-CoA = 1-O-hexadecyl-2-acetyl-sn-glycero-3-phosphocholine + CoA. It catalyses the reaction 1-O-octadecyl-sn-glycero-3-phosphocholine + acetyl-CoA = 1-O-octadecyl-2-acetyl-sn-glycero-3-phosphocholine + CoA. It carries out the reaction 1-hexadecanoyl-sn-glycero-3-phosphocholine + acetyl-CoA = 1-hexadecanoyl-2-acetyl-sn-glycero-3-phosphocholine + CoA. The enzyme catalyses 1-octadecanoyl-sn-glycero-3-phosphocholine + acetyl-CoA = 1-octadecanoyl-2-acetyl-sn-glycero-3-phosphocholine + CoA. The catalysed reaction is a 1-O-(1Z-alkenyl)-sn-glycero-3-phosphocholine + acetyl-CoA = 1-O-(1Z)-alkenyl-2-acetyl-sn-glycero-3-phosphocholine + CoA. It catalyses the reaction 1-O-octadecyl-sn-glycero-3-phosphocholine + (5Z,8Z,11Z,14Z)-eicosatetraenoyl-CoA = 1-O-octadecyl-2-(5Z,8Z,11Z,14Z)-eicosatetraenoyl-sn-glycero-3-phosphocholine + CoA. Its pathway is lipid metabolism; phospholipid metabolism. Functionally, exhibits both acyltransferase and acetyltransferase activities. Activity is calcium-dependent. Catalyzes the conversion of lysophosphatidylcholine (1-acyl-sn-glycero-3-phosphocholine or LPC) into phosphatidylcholine (1,2-diacyl-sn-glycero-3-phosphocholine or PC). Catalyzes the conversion 1-acyl-sn-glycerol-3-phosphate (lysophosphatidic acid or LPA) into 1,2-diacyl-sn-glycerol-3-phosphate (phosphatidic acid or PA) by incorporating an acyl moiety at the sn-2 position of the glycerol backbone. Involved in platelet-activating factor (PAF) biosynthesis by catalyzing the conversion of the PAF precursor, 1-O-alkyl-sn-glycero-3-phosphocholine (lyso-PAF) into 1-O-alkyl-2-acetyl-sn-glycero-3-phosphocholine (PAF). The protein is Lysophosphatidylcholine acyltransferase 2 (lpcat2) of Danio rerio (Zebrafish).